Reading from the N-terminus, the 537-residue chain is Zinc finger and BTB domain-containing protein 18 (537 aa).

The BTB domain maps to 24-91; sequence CDSTVLVGDA…MYEGKLQFKS (68 aa). The segment covering 122–143 has biased composition (basic and acidic residues); that stretch reads TAEADSTKREEDTSSCSDKVES. 2 disordered regions span residues 122 to 232 and 335 to 355; these read TAEA…RVSA and ASEL…LGGD. Composition is skewed to low complexity over residues 182 to 195 and 208 to 229; these read RLPS…TTSP and SPAG…ASRR. 4 C2H2-type zinc fingers span residues 385 to 407, 425 to 447, 453 to 475, and 481 to 504; these read FMCP…LSTH, PTCS…ERTH, YTCT…AVVH, and HACK…RKFH.

The protein belongs to the krueppel C2H2-type zinc-finger protein family. ZBTB18 subfamily.

Its subcellular location is the nucleus. Its function is as follows. Transcriptional repressor that plays a role in various developmental processes. Specifically binds the consensus DNA sequence 5'-[AC]ACATCTG[GT][AC]-3' which contains the E box core, and acts by recruiting chromatin remodeling multiprotein complexes. The polypeptide is Zinc finger and BTB domain-containing protein 18 (zbtb18) (Danio rerio (Zebrafish)).